Here is a 421-residue protein sequence, read N- to C-terminus: Gamma-glutamyl phosphate reductase (421 aa).

Belongs to the gamma-glutamyl phosphate reductase family.

The protein resides in the cytoplasm. It carries out the reaction L-glutamate 5-semialdehyde + phosphate + NADP(+) = L-glutamyl 5-phosphate + NADPH + H(+). Its pathway is amino-acid biosynthesis; L-proline biosynthesis; L-glutamate 5-semialdehyde from L-glutamate: step 2/2. Its function is as follows. Catalyzes the NADPH-dependent reduction of L-glutamate 5-phosphate into L-glutamate 5-semialdehyde and phosphate. The product spontaneously undergoes cyclization to form 1-pyrroline-5-carboxylate. This Acinetobacter baumannii (strain ACICU) protein is Gamma-glutamyl phosphate reductase.